Reading from the N-terminus, the 355-residue chain is Iron deficiency-induced protein A (355 aa).

Positions 1–34 form a signal peptide, tat-type signal; it reads MEKVGRRVFLGMGAAATAYVTHHLWNQNAESSYA. 5 residues coordinate Fe cation: histidine 49, tyrosine 50, tyrosine 180, tyrosine 236, and tyrosine 237.

Belongs to the bacterial solute-binding protein 1 family. Predicted to be exported by the Tat system. The position of the signal peptide cleavage has not been experimentally proven.

It localises to the cellular thylakoid membrane. Plays an important role in protecting the acceptor side of photosystem II (PSII) against oxidative damage, especially under iron-limiting growth conditions. In terms of biological role, may also be part of a periplasmic ABC transporter complex involved in iron import. This is Iron deficiency-induced protein A (idiA) from Thermosynechococcus vestitus (strain NIES-2133 / IAM M-273 / BP-1).